The following is a 950-amino-acid chain: MDMAQYQPGQRWISDSEAELGLGTILAQDGRLLTVLYPATGDTRQYALRNAPLTRVRFAPGDEVTHFEGWKMTVREVEESEGLLVYHGLTAQNEQCTLPETQLSNFIQFRLASDRLFAGQIDPLPWFSLRYHTLERRSQLLQSSLWGLGGARAQPIAHQLHIAREVADRMAPRVLLADEVGLGKTIEAGLIIHRQLLSGRAGRVLILVPENLQHQWLVEMRRRFNLQVALFDKERFAESDASNPFEDTQLALVALEWLKEDERAQDALFAAGWDLLVVDEAHHLVWHQDQVSAEYALVEQLAEIIPGVLLLTATPEQLGQDSHFARLRLLDPNRFHDLEAFRRESEQYRPVAEAVQELLDHGSLSAGARKAIHGFLGSEGDELLASVEGGDEEARSRLVRELLDRHGTGRVLFRNTRAAVQGFPQRELHAYPLPMPSQYEELPAGEHPDLYPEVNFQQQWEDGDDNNRWWRFDPRVEWLIDTLKMLKQFKVLVICAHAETALDLEDALRLRSGISATVFHEGMSILERDRAAAYFADEEFGAQVLICSEIGSEGRNFQFAHHLVLFDLPAHPDLLEQRIGRLDRIGQRHTIQLHVPHLENSAQQRLFQWYHQALNAFLNTCPTGNALQHEFGPRLLPLLDGGEDKAWDALLAEGRARREALEAELHSGRDRLLELNSGGAGEGEALVEAIEEQDDDFALPIYMERLFDAYGIHSEDHSENALILKPSEKMLDAGFPLGDDEGVTITYDRAQALAREDMQFLTWEHPMVQGGMDLVLSGSMGNTSVALIKNKALKPGTVLLELLFVSEAVAPRALQLGRWLPPQALRCLLDANGNDLAGRVSLETLNDQLESVPRVSANKFVQAQRDVLAKQFDVAEGKIVPRHEERVARAKQQFAAAMDEELARLTALKAVNPSVRDSELDSLRTQREEGLALLDKASLRLEAIRILVAG.

Residues 165 to 333 (EVADRMAPRV…FARLRLLDPN (169 aa)) form the Helicase ATP-binding domain. 178–185 (DEVGLGKT) is an ATP binding site. The short motif at 279 to 282 (DEAH) is the DEAH box element. Residues 475 to 629 (RVEWLIDTLK…TCPTGNALQH (155 aa)) enclose the Helicase C-terminal domain.

Belongs to the SNF2/RAD54 helicase family. RapA subfamily. Interacts with the RNAP. Has a higher affinity for the core RNAP than for the holoenzyme. Its ATPase activity is stimulated by binding to RNAP.

In terms of biological role, transcription regulator that activates transcription by stimulating RNA polymerase (RNAP) recycling in case of stress conditions such as supercoiled DNA or high salt concentrations. Probably acts by releasing the RNAP, when it is trapped or immobilized on tightly supercoiled DNA. Does not activate transcription on linear DNA. Probably not involved in DNA repair. The polypeptide is RNA polymerase-associated protein RapA (Pseudomonas aeruginosa (strain LESB58)).